Consider the following 335-residue polypeptide: Photosystem II assembly lipoprotein Ycf48 (335 aa).

An N-terminal signal peptide occupies residues M1 to G23. The N-palmitoyl cysteine moiety is linked to residue C24. The S-diacylglycerol cysteine moiety is linked to residue C24.

This sequence belongs to the Ycf48 family. In terms of assembly, part of early PSII assembly complexes which includes D1 (psbA) and PsbI; not found in mature PSII. Binds to the lumenal side of PSII complexes. Interacts with YidC.

It is found in the cellular thylakoid membrane. A factor required for optimal assembly of photosystem II (PSII), acting in the early stages of PSII assembly. Also plays a role in replacement of photodamaged D1 (psbA). Assists YidC in synthesis of chlorophyll-binding proteins. The sequence is that of Photosystem II assembly lipoprotein Ycf48 from Prochlorococcus marinus (strain MIT 9313).